The primary structure comprises 347 residues: Endophilin-A3 (347 aa).

Residues 1–21 (MSVAGLKKQFHKASQLFSEKI) form a membrane-binding amphipathic helix region. The 232-residue stretch at 18-249 (SEKISGAEGT…LELRISLASK (232 aa)) folds into the BAR domain. Positions 60–87 (PNPAYRAKLGMLNTVSKLRGQVKATGYP) are required for dimerization upon membrane association. Positions 180-201 (EEEIRQAVEKFEESKELAERSM) form a coiled coil. The segment at 218–254 (FVEAALDYHRQSTEILQELQSKLELRISLASKVPKRE) is interaction with ARC. The disordered stretch occupies residues 255–288 (FMPKPVNMSSTDANGVGPSSSSKTPGTDTPADQP). Positions 261-281 (NMSSTDANGVGPSSSSKTPGT) are enriched in polar residues. The SH3 domain maps to 285–344 (ADQPCCRGLYDFEPENEGELGFKEGDIITLTNQIDENWYEGMLRGESGFFPINYVEVIVP).

This sequence belongs to the endophilin family. Interacts with ARC, DNM1, SGIP1, SYNJ1 and DYDC1. Interacts with FASLG. Interacts with ATXN2. Interacts with BIN2.

It is found in the cytoplasm. It localises to the early endosome membrane. Implicated in endocytosis. May recruit other proteins to membranes with high curvature. The chain is Endophilin-A3 (Sh3gl3) from Mus musculus (Mouse).